The following is a 143-amino-acid chain: 18.1 kDa class I heat shock protein (143 aa).

In terms of domain architecture, sHSP spans 29 to 143; sequence ENSAFVSTRI…PEVKSIEISS (115 aa).

The protein belongs to the small heat shock protein (HSP20) family. In terms of assembly, forms oligomeric structures.

It localises to the cytoplasm. The sequence is that of 18.1 kDa class I heat shock protein (HSP18.1) from Medicago sativa (Alfalfa).